The sequence spans 660 residues: Putative ATP-dependent RNA helicase Pl10 (660 aa).

Residues 1 to 11 (MSHVAEEDELG) show a composition bias toward acidic residues. Positions 1–117 (MSHVAEEDEL…SRGGRSGFGK (117 aa)) are disordered. The residue at position 2 (Ser2) is an N-acetylserine. Low complexity predominate over residues 12–21 (LDQQLAGLDL). Positions 24 to 34 (RDSQSGGSTAS) are enriched in polar residues. The span at 44–66 (RNREAAKAFYDKDGSRWSKDKDA) shows a compositional bias: basic and acidic residues. Lys55 carries the post-translational modification N6-acetyllysine. Phosphoserine occurs at positions 80, 84, and 89. The segment covering 93–103 (GRFDERGRSDY) has biased composition (basic and acidic residues). The residue at position 100 (Arg100) is an Omega-N-methylarginine. Position 101 is a phosphoserine (Ser101). The residue at position 103 (Tyr103) is a Phosphotyrosine. Arg109 is subject to Omega-N-methylarginine. Lys117 bears the N6-acetyllysine mark. The Q motif signature appears at 179-207 (ESFSDVEMGEIIMGNIELTRYTRPTPVQK). A Phosphoserine modification is found at Ser182. ATP is bound at residue 199–206 (YTRPTPVQ). One can recognise a Helicase ATP-binding domain in the interval 210 to 402 (IPIIKEKRDL…RDFLDEYIFL (193 aa)). A Glycyl lysine isopeptide (Lys-Gly) (interchain with G-Cter in SUMO2) cross-link involves residue Lys214. 223 to 230 (AQTGSGKT) is a binding site for ATP. The DEAD box motif lies at 346–349 (DEAD). A Helicase C-terminal domain is found at 413-574 (NITQKVVWVE…EVPSWLENMA (162 aa)). Ser455 carries the phosphoserine modification. Arg590 carries the post-translational modification Omega-N-methylarginine. Phosphoserine is present on residues Ser592, Ser603, and Ser610. Residues 598–632 (RDYRQSSGASSSSFSSGRASNSRSGGGSHGSSRGF) form a disordered region. Residues 602-620 (QSSGASSSSFSSGRASNSR) are compositionally biased toward low complexity. 2 positions are modified to omega-N-methylarginine: Arg615 and Arg630. Residues 621–632 (SGGGSHGSSRGF) show a composition bias toward gly residues.

Belongs to the DEAD box helicase family. DDX3/DED1 subfamily. In terms of tissue distribution, testis.

It carries out the reaction ATP + H2O = ADP + phosphate + H(+). In terms of biological role, putative ATP-dependent RNA helicase. Possible role in a key step of the spermatogenic process. The polypeptide is Putative ATP-dependent RNA helicase Pl10 (D1Pas1) (Mus musculus (Mouse)).